The sequence spans 560 residues: Membrane protein insertase YidC (560 aa).

A helical transmembrane segment spans residues 1 to 21; sequence MDIKRTILIAALAIVSYVMVL. The disordered stretch occupies residues 42–66; it reads VAPGLPDGVPAANNGASADVPSANA. 5 helical membrane passes run 341–361, 367–387, 437–457, 468–488, and 515–535; these read LELT…FWLL, LLGN…GLFF, LGGC…YWVL, WMLW…PIIM, and PIIF…YWVV.

Belongs to the OXA1/ALB3/YidC family. Type 1 subfamily. In terms of assembly, interacts with the Sec translocase complex via SecD. Specifically interacts with transmembrane segments of nascent integral membrane proteins during membrane integration.

It is found in the cell inner membrane. In terms of biological role, required for the insertion and/or proper folding and/or complex formation of integral membrane proteins into the membrane. Involved in integration of membrane proteins that insert both dependently and independently of the Sec translocase complex, as well as at least some lipoproteins. Aids folding of multispanning membrane proteins. This is Membrane protein insertase YidC from Pseudomonas putida (strain W619).